The chain runs to 436 residues: 4-hydroxyphenylpyruvate dioxygenase (436 aa).

2 consecutive VOC domains span residues 38 to 194 (RFHH…GFEV) and 210 to 370 (RLDH…IFTK). Fe cation-binding residues include His-213, His-295, and Glu-381.

Belongs to the 4HPPD family. Requires Fe cation as cofactor.

The protein resides in the cytoplasm. The enzyme catalyses 3-(4-hydroxyphenyl)pyruvate + O2 = homogentisate + CO2. It participates in amino-acid degradation; L-phenylalanine degradation; acetoacetate and fumarate from L-phenylalanine: step 3/6. It functions in the pathway cofactor biosynthesis; prenylquinone biosynthesis. The protein is 4-hydroxyphenylpyruvate dioxygenase of Plectranthus scutellarioides (Coleus).